Here is a 249-residue protein sequence, read N- to C-terminus: Tetrahydromethanopterin S-methyltransferase subunit A (249 aa).

Over 1 to 227 the chain is Cytoplasmic; sequence MADKKEVIQN…KISSGYYAGK (227 aa). Residue His84 participates in 5-hydroxybenzimidazolylcob(I)amide binding. The chain crosses the membrane as a helical span at residues 228-248; it reads IEGIVIGFILTLVFLIIIIQG. A topological domain (extracellular) is located at residue Leu249.

Belongs to the MtrA family. The complex is composed of 8 subunits; MtrA, MtrB, MtrC, MtrD, MtrE, MtrF, MtrG and MtrH. It depends on 5-hydroxybenzimidazolylcob(I)amide as a cofactor.

The protein resides in the cell membrane. The catalysed reaction is 5-methyl-5,6,7,8-tetrahydromethanopterin + coenzyme M + 2 Na(+)(in) = 5,6,7,8-tetrahydromethanopterin + methyl-coenzyme M + 2 Na(+)(out). It participates in one-carbon metabolism; methanogenesis from CO(2); methyl-coenzyme M from 5,10-methylene-5,6,7,8-tetrahydromethanopterin: step 2/2. In terms of biological role, part of a complex that catalyzes the formation of methyl-coenzyme M and tetrahydromethanopterin from coenzyme M and methyl-tetrahydromethanopterin. This is an energy-conserving, sodium-ion translocating step. This is Tetrahydromethanopterin S-methyltransferase subunit A from Methanosphaera stadtmanae (strain ATCC 43021 / DSM 3091 / JCM 11832 / MCB-3).